A 452-amino-acid chain; its full sequence is Friend leukemia integration 1 transcription factor (452 aa).

The residue at position 39 (serine 39) is a Phosphoserine. A PNT domain is found at 112 to 198; that stretch reads PPPPNMTTNE…SHLSYLRESS (87 aa). The disordered stretch occupies residues 209–271; the sequence is DQSSRLSVKE…PYQILGPTSS (63 aa). Positions 215–226 are enriched in basic and acidic residues; the sequence is SVKEDPSYDSVR. Residues 248–257 are compositionally biased toward polar residues; it reads QTISKNTEQR. Residues 281 to 361 constitute a DNA-binding region (ETS); it reads IQLWQFLLEL…HGKRYAYKFD (81 aa). The interval 433–452 is disordered; it reads NPNVPRHPNTHVPSHLGSYY.

It belongs to the ETS family. As to quaternary structure, can form homodimers or heterodimers with ETV6/TEL1.

It localises to the nucleus. In terms of biological role, sequence-specific transcriptional activator. Recognizes the DNA sequence 5'-C[CA]GGAAGT-3'. The chain is Friend leukemia integration 1 transcription factor (FLI1) from Homo sapiens (Human).